The following is a 303-amino-acid chain: 2-phospho-L-lactate transferase (303 aa).

7,8-didemethyl-8-hydroxy-5-deazariboflavin-binding residues include aspartate 48 and lysine 87.

The protein belongs to the CofD family. Homodimer. Mg(2+) serves as cofactor.

It carries out the reaction (2S)-lactyl-2-diphospho-5'-guanosine + 7,8-didemethyl-8-hydroxy-5-deazariboflavin = oxidized coenzyme F420-0 + GMP + H(+). It functions in the pathway cofactor biosynthesis; coenzyme F420 biosynthesis. In terms of biological role, catalyzes the transfer of the 2-phospholactate moiety from (2S)-lactyl-2-diphospho-5'-guanosine to 7,8-didemethyl-8-hydroxy-5-deazariboflavin (FO) with the formation of oxidized coenzyme F420-0 and GMP. The polypeptide is 2-phospho-L-lactate transferase (Methanosarcina mazei (strain ATCC BAA-159 / DSM 3647 / Goe1 / Go1 / JCM 11833 / OCM 88) (Methanosarcina frisia)).